The sequence spans 602 residues: uncharacterized protein (602 aa).

It belongs to the glycosyltransferase 2 family.

This is an uncharacterized protein from Rickettsia felis (strain ATCC VR-1525 / URRWXCal2) (Rickettsia azadi).